Consider the following 335-residue polypeptide: DNA-directed RNA polymerase subunit alpha (335 aa).

An alpha N-terminal domain (alpha-NTD) region spans residues 1-233 (MQRNWRELIK…DQLTIFINFE (233 aa)). Positions 249–335 (FNDHLFRSVD…DIENRRKEQE (87 aa)) are alpha C-terminal domain (alpha-CTD).

Belongs to the RNA polymerase alpha chain family. Homodimer. The RNAP catalytic core consists of 2 alpha, 1 beta, 1 beta' and 1 omega subunit. When a sigma factor is associated with the core the holoenzyme is formed, which can initiate transcription.

It carries out the reaction RNA(n) + a ribonucleoside 5'-triphosphate = RNA(n+1) + diphosphate. Functionally, DNA-dependent RNA polymerase catalyzes the transcription of DNA into RNA using the four ribonucleoside triphosphates as substrates. This is DNA-directed RNA polymerase subunit alpha from Syntrophobacter fumaroxidans (strain DSM 10017 / MPOB).